Consider the following 383-residue polypeptide: Neuropeptide Y receptor type 1 (383 aa).

Over 1-44 (MNSTSFSQVENHSIYYNFSEKNSRFLAFENDDCHLPLAMIFTLA) the chain is Extracellular. Residues asparagine 2, asparagine 11, and asparagine 17 are each glycosylated (N-linked (GlcNAc...) asparagine). A helical transmembrane segment spans residues 45 to 65 (LAYGAVIILGVSGNLALIIII). Residues 66–76 (LKQKEMRNVTN) lie on the Cytoplasmic side of the membrane. Residues 77–97 (ILIVNLSFSDLLVAIMCLPFT) form a helical membrane-spanning segment. The Extracellular portion of the chain corresponds to 98 to 116 (FVYTLMDHWVFGEAMCKLN). Cysteine 113 and cysteine 198 are joined by a disulfide. The helical transmembrane segment at 117 to 137 (PFVQCVSITVSIFSLVLIAVE) threads the bilayer. Topologically, residues 138-154 (RHQLIINPRGWRPNNRH) are cytoplasmic. Residues 155–175 (AYVGIAVIWVLAVASSLPFLI) traverse the membrane as a helical segment. The Extracellular segment spans residues 176-211 (YQVLTDEPFQNVTLDAFKDKYVCFDKFPSDSHRLSY). The N-linked (GlcNAc...) asparagine glycan is linked to asparagine 186. Residues 212 to 232 (TTLLLVLQYFGPLCFIFICYF) traverse the membrane as a helical segment. The Cytoplasmic portion of the chain corresponds to 233 to 260 (KIYVRLKRRNSMMDKMRDNKYRSSEAKR). The helical transmembrane segment at 261–281 (INIMLLSIVVAFAVCWLPLTI) threads the bilayer. Over 282-299 (FNTVFDWDHQIIATCNHN) the chain is Extracellular. The helical transmembrane segment at 300–320 (LLFLLCHLTAMISTCVNPIFY) threads the bilayer. Over 321-383 (GFLNKNFQRD…KIHTDDNEKI (63 aa)) the chain is Cytoplasmic. The S-palmitoyl cysteine moiety is linked to residue cysteine 338. Serine 368 is modified (phosphoserine).

The protein belongs to the G-protein coupled receptor 1 family.

It localises to the cell membrane. Receptor for neuropeptide Y and peptide YY. The sequence is that of Neuropeptide Y receptor type 1 (NPY1R) from Bos taurus (Bovine).